Here is a 354-residue protein sequence, read N- to C-terminus: Probable calcium-binding protein CML50 (354 aa).

Composition is skewed to low complexity over residues 1–10 (MSGYPPTSQG) and 28–71 (YSSG…SSYG). Residues 1-159 (MSGYPPTSQG…PASSGHGGGY (159 aa)) are disordered. Positions 72 to 81 (APPPSAPYAP) are enriched in pro residues. The span at 106 to 117 (GSSDYGSYGAGP) shows a compositional bias: low complexity. 2 EF-hand domains span residues 183 to 218 (GTDP…YQQR) and 249 to 284 (YSLQ…LGFS). The Ca(2+) site is built by aspartate 196, aspartate 198, serine 200, glutamate 207, aspartate 262, aspartate 264, serine 266, arginine 268, and glutamate 273.

Functionally, potential calcium sensor. This is Probable calcium-binding protein CML50 (CML50) from Arabidopsis thaliana (Mouse-ear cress).